The primary structure comprises 353 residues: Major outer membrane protein (353 aa).

The signal sequence occupies residues 1-20 (MKKTIVALAVAAVAATSANA).

In terms of assembly, disulfide bond interactions within and between MOMP molecules and other components form high molecular-weight oligomers.

It is found in the cell outer membrane. Functionally, structural rigidity of the outer membrane of elementary bodies and porin forming, permitting diffusion of solutes through the intracellular reticulate body membrane. The polypeptide is Major outer membrane protein (ompH) (Pasteurella multocida).